Reading from the N-terminus, the 274-residue chain is MVLTHSSPDLLTIGKRNFHSRLFAGTGKYPSLKVMQESLRSSGCEMVTVAVRRVQTMASGHAGLIEAIDWSKIWMLPNTAGCATAEEAIRVARLGRELAKLAGQEDNKFVKLEVIPDSRYLLPDPFGTLEAAEQLVKEGFEVLPYINADPLLAKRLEEVGCATVMPLGSPIGSGQGLRNAANISLIIENARVPVVVDAGIGVPSEAAQALEMGADAVLVNSAIALAGDPITMAEAMRWAIQAGRQAYRSGRLPERAAASPSSPTTGIIAEAKTK.

The active-site Schiff-base intermediate with DXP is the Lys-111. 1-deoxy-D-xylulose 5-phosphate-binding positions include Gly-172, 198–199 (AG), and 220–221 (NS). A disordered region spans residues 251–274 (RLPERAAASPSSPTTGIIAEAKTK).

The protein belongs to the ThiG family. In terms of assembly, homotetramer. Forms heterodimers with either ThiH or ThiS.

The protein resides in the cytoplasm. It catalyses the reaction [ThiS sulfur-carrier protein]-C-terminal-Gly-aminoethanethioate + 2-iminoacetate + 1-deoxy-D-xylulose 5-phosphate = [ThiS sulfur-carrier protein]-C-terminal Gly-Gly + 2-[(2R,5Z)-2-carboxy-4-methylthiazol-5(2H)-ylidene]ethyl phosphate + 2 H2O + H(+). It participates in cofactor biosynthesis; thiamine diphosphate biosynthesis. In terms of biological role, catalyzes the rearrangement of 1-deoxy-D-xylulose 5-phosphate (DXP) to produce the thiazole phosphate moiety of thiamine. Sulfur is provided by the thiocarboxylate moiety of the carrier protein ThiS. In vitro, sulfur can be provided by H(2)S. In Prochlorococcus marinus (strain MIT 9313), this protein is Thiazole synthase.